Reading from the N-terminus, the 381-residue chain is Phthiodiolone/phenolphthiodiolone dimycocerosates ketoreductase (381 aa).

Belongs to the mer family. Phthiodiolone/phenolphthiodiolone dimycocerosates ketoreductase subfamily.

Catalyzes the reduction of the keto moiety of phthiodiolone dimycocerosates (DIM B) and glycosylated phenolphthiodiolone dimycocerosates to form the intermediate compounds phthiotriol and glycosylated phenolphthiotriol dimycocerosates during phthiocerol dimycocerosates (DIM A) and glycosylated phenolphthiocerol dimycocerosates (PGL) biosynthesis. This chain is Phthiodiolone/phenolphthiodiolone dimycocerosates ketoreductase, found in Mycobacterium tuberculosis (strain CDC 1551 / Oshkosh).